Consider the following 316-residue polypeptide: MNLILMINLFLYINGLDPVLTLGSLAFVLILISLPFSFWNVGENSNSSIVRILIASANILLAIQLVFRWIQSGHFPISNLYESLCFLTWGLTFIQLLIERTFPYPLIQAALTPISLLSIAFASFVLPDELKASSSLVPALKSNWLVMHVSVIMCSYAALLIGSLLSLVVLLSSSRETLQIRSNSMGIGGFKNKSENLNIVKSIDELIPITFSKSEELDNLSYRTITFGFLLLTFGLISGAVWANEAWGSWWSWDPKETWAFISWLIYAAYLHTRLSRGWQGKRPAIIAIIGLFIILICYIGVNFLGIGLHSYGWFL.

8 helical membrane passes run 19-39 (VLTLGSLAFVLILISLPFSFW), 47-67 (SSIVRILIASANILLAIQLVF), 77-97 (ISNLYESLCFLTWGLTFIQLL), 106-126 (LIQAALTPISLLSIAFASFVL), 151-171 (VIMCSYAALLIGSLLSLVVLL), 224-244 (TITFGFLLLTFGLISGAVWAN), 258-275 (TWAFISWLIYAAYLHTRL), and 285-305 (AIIAIIGLFIILICYIGVNFL).

Belongs to the CcmF/CycK/Ccl1/NrfE/CcsA family. May interact with ccs1.

The protein resides in the cellular thylakoid membrane. Its function is as follows. Required during biogenesis of c-type cytochromes (cytochrome c6 and cytochrome f) at the step of heme attachment. This Prochlorococcus marinus (strain SARG / CCMP1375 / SS120) protein is Cytochrome c biogenesis protein CcsA.